A 128-amino-acid polypeptide reads, in one-letter code: Glycine cleavage system H protein (128 aa).

The Lipoyl-binding domain maps to 22–104 (AIVVGITDFA…YEEGWMITIE (83 aa)). N6-lipoyllysine is present on K63.

Belongs to the GcvH family. In terms of assembly, the glycine cleavage system is composed of four proteins: P, T, L and H. The cofactor is (R)-lipoate.

In terms of biological role, the glycine cleavage system catalyzes the degradation of glycine. The H protein shuttles the methylamine group of glycine from the P protein to the T protein. This Anaeromyxobacter dehalogenans (strain 2CP-1 / ATCC BAA-258) protein is Glycine cleavage system H protein.